The chain runs to 266 residues: Carboxy-S-adenosyl-L-methionine synthase (266 aa).

Residues 1-24 (MPKRETQSLHDTQQQPGPTAPQRD) are disordered. Residues tyrosine 58, 83 to 85 (GCS), 108 to 109 (DN), 136 to 137 (DI), asparagine 151, and arginine 218 each bind S-adenosyl-L-methionine.

It belongs to the class I-like SAM-binding methyltransferase superfamily. Cx-SAM synthase family. In terms of assembly, homodimer.

It carries out the reaction prephenate + S-adenosyl-L-methionine = carboxy-S-adenosyl-L-methionine + 3-phenylpyruvate + H2O. Functionally, catalyzes the conversion of S-adenosyl-L-methionine (SAM) to carboxy-S-adenosyl-L-methionine (Cx-SAM). This chain is Carboxy-S-adenosyl-L-methionine synthase, found in Yersinia enterocolitica serotype O:8 / biotype 1B (strain NCTC 13174 / 8081).